A 333-amino-acid chain; its full sequence is Methionyl-tRNA formyltransferase (333 aa).

106–109 (SLLP) provides a ligand contact to (6S)-5,6,7,8-tetrahydrofolate.

It belongs to the Fmt family.

It catalyses the reaction L-methionyl-tRNA(fMet) + (6R)-10-formyltetrahydrofolate = N-formyl-L-methionyl-tRNA(fMet) + (6S)-5,6,7,8-tetrahydrofolate + H(+). Functionally, attaches a formyl group to the free amino group of methionyl-tRNA(fMet). The formyl group appears to play a dual role in the initiator identity of N-formylmethionyl-tRNA by promoting its recognition by IF2 and preventing the misappropriation of this tRNA by the elongation apparatus. The protein is Methionyl-tRNA formyltransferase of Elusimicrobium minutum (strain Pei191).